Here is a 702-residue protein sequence, read N- to C-terminus: DnaJ homolog subfamily C member 14 (702 aa).

Disordered regions lie at residues 1-148 (MAQK…GGNG) and 165-229 (DELE…KRSQ). The span at 75 to 84 (HGPPGGPGPP) shows a compositional bias: pro residues. Residues 88–103 (EDPDQSETSSEEESGV) show a composition bias toward acidic residues. Over residues 113 to 133 (TGNQKDGNSFLSIPSACNCQG) the composition is skewed to polar residues. The segment covering 165-175 (DELEEEYDDEE) has biased composition (acidic residues). The span at 192–201 (PPSRRQRHRF) shows a compositional bias: basic residues. The span at 202–217 (PTKEDTREGGRRDPRS) shows a compositional bias: basic and acidic residues. Over residues 218–227 (PGRHRLGRKR) the composition is skewed to basic residues. Helical transmembrane passes span 250–270 (AGFWWLIELLVLVGEYVETCG), 300–320 (GWAQVMFQFLSQGFYCGVGLF), and 326–346 (LLGALLLLALALFLGFLQLGW). Positions 443–507 (NPFHVLGVEA…EKRKEYEMKR (65 aa)) constitute a J domain. A disordered region spans residues 658–702 (MPNGNFFAAPQPAPGAAAASKPNSTVPKGEAKPKRRKKVRRPFQR). Residues 659–676 (PNGNFFAAPQPAPGAAAA) are compositionally biased toward low complexity. A compositionally biased stretch (basic residues) spans 690 to 702 (PKRRKKVRRPFQR).

In terms of assembly, interacts with the FxxxFxxxF motif of DRD1 via its C-terminal domain. In terms of tissue distribution, highly expressed in pancreas and selectively expressed in brain, lung, liver, skeletal muscle and kidney.

The protein resides in the endoplasmic reticulum membrane. Regulates the export of target proteins, such as DRD1, from the endoplasmic reticulum to the cell surface. The polypeptide is DnaJ homolog subfamily C member 14 (DNAJC14) (Homo sapiens (Human)).